The sequence spans 211 residues: Histidine biosynthesis bifunctional protein HisIE (211 aa).

Residues 1-122 (MSVKAAEVSS…DPQEESQMVW (122 aa)) are phosphoribosyl-AMP cyclohydrolase. Positions 123-211 (LHQLEQLLAA…VINKLKERHK (89 aa)) are phosphoribosyl-ATP pyrophosphohydrolase.

It in the N-terminal section; belongs to the PRA-CH family. This sequence in the C-terminal section; belongs to the PRA-PH family.

The protein resides in the cytoplasm. It carries out the reaction 1-(5-phospho-beta-D-ribosyl)-ATP + H2O = 1-(5-phospho-beta-D-ribosyl)-5'-AMP + diphosphate + H(+). It catalyses the reaction 1-(5-phospho-beta-D-ribosyl)-5'-AMP + H2O = 1-(5-phospho-beta-D-ribosyl)-5-[(5-phospho-beta-D-ribosylamino)methylideneamino]imidazole-4-carboxamide. It functions in the pathway amino-acid biosynthesis; L-histidine biosynthesis; L-histidine from 5-phospho-alpha-D-ribose 1-diphosphate: step 2/9. Its pathway is amino-acid biosynthesis; L-histidine biosynthesis; L-histidine from 5-phospho-alpha-D-ribose 1-diphosphate: step 3/9. The sequence is that of Histidine biosynthesis bifunctional protein HisIE from Vibrio vulnificus (strain YJ016).